Consider the following 92-residue polypeptide: MARSLKKGPFIAHHLLKKVELLNTSGKTEVIKTWSRASTILPMMVGHTIAVHNGRQHLPVFITDQMVGHKLGEFAPTRTFKGHTKSDKKARR.

Belongs to the universal ribosomal protein uS19 family.

It is found in the plastid. The protein resides in the cyanelle. Protein S19 forms a complex with S13 that binds strongly to the 16S ribosomal RNA. In Cyanophora paradoxa, this protein is Small ribosomal subunit protein uS19c (rps19).